Here is a 286-residue protein sequence, read N- to C-terminus: MPIKVENVSFIYNEGTPYATVALKDINFSIDDEEFVGIIGHTGSGKSTLIQQLNGLLKPSKGKIYINGIDITDKKVSLKDIRKQVGLVFQYPEYQLFEETVFKDIAFGPSNLGLSEEEVKERVYEAMEIVGISKELADKSPFELSGGQKRRVAIAGILAMRPKILILDEPTAGLDPKGKQEILNKIKEIHDKYKMITILVSHNMEDIARIADKIIVMNRGKIELIGTPREVFREAERLEKIGLSVPQITSLARELRKRGVPIPPDVLTIEEAKEHILRYLRGTKNV.

One can recognise an ABC transporter domain in the interval 3 to 244; sequence IKVENVSFIY…AERLEKIGLS (242 aa). Residue 40-47 coordinates ATP; that stretch reads GHTGSGKS.

It belongs to the ABC transporter superfamily. Energy-coupling factor EcfA family. In terms of assembly, forms a stable energy-coupling factor (ECF) transporter complex composed of 2 membrane-embedded substrate-binding proteins (S component), 2 ATP-binding proteins (A component) and 2 transmembrane proteins (T component).

The protein resides in the cell membrane. In terms of biological role, ATP-binding (A) component of a common energy-coupling factor (ECF) ABC-transporter complex. Unlike classic ABC transporters this ECF transporter provides the energy necessary to transport a number of different substrates. In Caldanaerobacter subterraneus subsp. tengcongensis (strain DSM 15242 / JCM 11007 / NBRC 100824 / MB4) (Thermoanaerobacter tengcongensis), this protein is Energy-coupling factor transporter ATP-binding protein EcfA2.